The following is a 739-amino-acid chain: MLRSELRDMVVAMVLWGILLPFCLSQTTSPSQDGKIKFRLAGYPRKHNEGRIEVFYNREWGTICDDDFTLANAHVLCRQLGFVEALSWSHSAKYGPGSGKIWLDNVICGGSENSIEKCVSRGWGNSDCTHQEDAGVICKDERLPGFAESNIIEMQVDEKRMEKIRLRPLKGAHAGRLPVTEGVVEVKFKEGWGHICNTGWTIKNSRVVCGMMGFPSQRSVGKKPNSLKSAYRIHSVTCSGNEAHLSACTMEFSRANSSAPCPGGGAAVVSCVPGLQFTQGRVRKAKLNPVPQMRLKGGARAGEGRVEVLKGSEWGTVCDDHWNLQSASVVCRELGFGTAKEALTGARMGQGMGPIYMNEVQCGGDEKSLWDCPHQSITAEDCKHTEDASVICNIPYMGFEKLMRLTGGRTRLEGRVELLLPAGGGVRDWGLICGDGWTSREAMVVCRQLGLGHASSGLRETWYWDSSNVTEMVMSGVKCKGDEMTLTDCQHHSVVSCKRAGAQFSAGVICSDMASDLVLNAPLVEQTVYIEDRPLHLLYCAAEENCLAKSAAQASWPYGHRRLLRFSSEIHNIGKADFRPRLGRHSWVWHECHRHYHSMDIFTYYDLLSLNGTKVADGHKASFCLEDTECHEGVSKRYECANFGEQGITVGCWDLYRHDIDCQWIDITDVSPGNYILQVIINPNFEVAESDFTNNAMRCNCKYDGHRVWLHKCHLGDSFSEEAEKEFEHYPGQLNNKIS.

The first 25 residues, Met-1–Ser-25, serve as a signal peptide directing secretion. 4 consecutive SRCR domains span residues Phe-38–Lys-139, Leu-166–Val-272, Met-293–Asn-393, and Met-403–Ser-511. 12 disulfides stabilise this stretch: Cys-64/Cys-128, Cys-77/Cys-138, Cys-108/Cys-118, Cys-196/Cys-261, Cys-209/Cys-271, Cys-238/Cys-248, Cys-318/Cys-382, Cys-331/Cys-392, Cys-362/Cys-372, Cys-433/Cys-497, Cys-446/Cys-510, and Cys-479/Cys-489. Residue Asn-256 is glycosylated (N-linked (GlcNAc...) asparagine). Asn-468 carries an N-linked (GlcNAc...) asparagine glycan. A glycan (N-linked (GlcNAc...) asparagine) is linked at Asn-611. Residues Lys-620–Tyr-656 constitute a cross-link (lysine tyrosylquinone (Lys-Tyr)). A 2',4',5'-topaquinone modification is found at Tyr-656.

It belongs to the lysyl oxidase family. The cofactor is Cu cation. Lysine tyrosylquinone residue serves as cofactor. The lysine tyrosylquinone cross-link (LTQ) is generated by condensation of the epsilon-amino group of a lysine with a topaquinone produced by oxidation of tyrosine.

It localises to the secreted. It is found in the extracellular space. The protein localises to the cytoplasm. The protein resides in the nucleus. The catalysed reaction is L-lysyl-[protein] + O2 + H2O = (S)-2-amino-6-oxohexanoyl-[protein] + H2O2 + NH4(+). The enzyme catalyses N(6)-acetyl-L-lysyl-[protein] + O2 + H2O = acetamide + (S)-2-amino-6-oxohexanoyl-[protein] + H2O2. Its function is as follows. Protein-lysine 6-oxidase that mediates the oxidation of peptidyl lysine residues to allysine in target proteins. Catalyzes the post-translational oxidative deamination of peptidyl lysine residues in precursors of elastin and different types of collagens, a prerequisite in the formation of cross-links between collagens and elastin. Can mediate oxidation of lysine residues that are acetylated. Also able to catalyze deacetylation of lysine residues. The protein is Lysyl oxidase homolog 3A of Danio rerio (Zebrafish).